Reading from the N-terminus, the 264-residue chain is Thiazole synthase (264 aa).

Residue Lys-106 is the Schiff-base intermediate with DXP of the active site. Residues Gly-167, 193 to 194 (AG), and 215 to 216 (NT) contribute to the 1-deoxy-D-xylulose 5-phosphate site.

This sequence belongs to the ThiG family. In terms of assembly, homotetramer. Forms heterodimers with either ThiH or ThiS.

It is found in the cytoplasm. It carries out the reaction [ThiS sulfur-carrier protein]-C-terminal-Gly-aminoethanethioate + 2-iminoacetate + 1-deoxy-D-xylulose 5-phosphate = [ThiS sulfur-carrier protein]-C-terminal Gly-Gly + 2-[(2R,5Z)-2-carboxy-4-methylthiazol-5(2H)-ylidene]ethyl phosphate + 2 H2O + H(+). It participates in cofactor biosynthesis; thiamine diphosphate biosynthesis. Functionally, catalyzes the rearrangement of 1-deoxy-D-xylulose 5-phosphate (DXP) to produce the thiazole phosphate moiety of thiamine. Sulfur is provided by the thiocarboxylate moiety of the carrier protein ThiS. In vitro, sulfur can be provided by H(2)S. This Xylella fastidiosa (strain Temecula1 / ATCC 700964) protein is Thiazole synthase.